The following is a 234-amino-acid chain: Bradykinin-releasing enzyme KR-E-1 (234 aa).

Residues Val-1–Ala-225 form the Peptidase S1 domain. Disulfide bonds link Cys-7–Cys-139, Cys-26–Cys-42, Cys-74–Cys-232, Cys-118–Cys-186, Cys-150–Cys-165, and Cys-176–Cys-201. Asn-20 carries N-linked (GlcNAc...) asparagine glycosylation. Residues His-41 and Asp-86 each act as charge relay system in the active site. Ser-180 functions as the Charge relay system in the catalytic mechanism.

Belongs to the peptidase S1 family. Snake venom subfamily. As to quaternary structure, monomer. As to expression, expressed by the venom gland.

The protein localises to the secreted. Its function is as follows. Bradykinin-releasing enzyme. Releases bradykinin from bovine HMW kininogen. Has anticoagulant activity. Increases permeability of capillaries by intradermal injection into rabbits. The chain is Bradykinin-releasing enzyme KR-E-1 from Gloydius ussuriensis (Ussuri mamushi).